A 226-amino-acid chain; its full sequence is Peroxiredoxin-like 2C (226 aa).

Residues methionine 1–threonine 24 are disordered.

Belongs to the peroxiredoxin-like PRXL2 family. PRXL2C subfamily.

May positively regulate ERK1/2 signaling and AKT1 activation leading to HIF1A up-regulation with an increased expression of glycolysis genes and enhanced glycolysis. In Mus musculus (Mouse), this protein is Peroxiredoxin-like 2C (Prxl2c).